The chain runs to 909 residues: E3 ubiquitin-protein ligase HACE1 (909 aa).

Positions 1–21 (MERAMEQLNRLTRSLRRARTV) are N-terminal helix important for homodimerization. 7 ANK repeats span residues 23-55 (LPDD…NSKF), 64-93 (VKRS…NPNY), 97-126 (SGCT…DVNI), 130-159 (EGLT…DVDV), 163-192 (MGQT…DINR), 196-226 (SGAT…YLSD), and 228-253 (NGVT…QYHP). Positions 396–433 (KGQDQDGTSIPPFEPPGPGSYENLSTGTGESKPDVLGG) are disordered. Residues 574-909 (NCAKLKQGIA…HCGSYGYTMA (336 aa)) form the HECT domain. Catalysis depends on Cys-876, which acts as the Glycyl thioester intermediate.

Homodimer. The homodimer is autoinhibited and stabilized by its N-terminal helix. Interacts with RAB1 (RAB1A, RAB1B or RAB1C), RAB4 (RAB4A or RAB4B) and RAB11 (RAB11A or RAB11B); in a GTP-dependent manner. Interacts with the 26S proteasomal complex through the 20S core proteasomal subunit. Interacts with RARB. Post-translationally, autoubiquitinated.

The protein resides in the golgi apparatus. It is found in the golgi stack membrane. It localises to the cytoplasm. Its subcellular location is the endoplasmic reticulum. It catalyses the reaction S-ubiquitinyl-[E2 ubiquitin-conjugating enzyme]-L-cysteine + [acceptor protein]-L-lysine = [E2 ubiquitin-conjugating enzyme]-L-cysteine + N(6)-ubiquitinyl-[acceptor protein]-L-lysine.. It functions in the pathway protein modification; protein ubiquitination. In terms of biological role, E3 ubiquitin-protein ligase involved in Golgi membrane fusion and regulation of small GTPases. Acts as a regulator of Golgi membrane dynamics during the cell cycle: recruited to Golgi membrane by Rab proteins and regulates postmitotic Golgi membrane fusion. Acts by mediating ubiquitination during mitotic Golgi disassembly, ubiquitination serving as a signal for Golgi reassembly later, after cell division. Specifically binds GTP-bound RAC1, mediating ubiquitination and subsequent degradation of active RAC1, thereby playing a role in host defense against pathogens. May also act as a transcription regulator via its interaction with RARB. The protein is E3 ubiquitin-protein ligase HACE1 (HACE1) of Bos taurus (Bovine).